A 41-amino-acid chain; its full sequence is Augerpeptide hhe6.1 (41 aa).

3 disulfides stabilise this stretch: Cys-11-Cys-32, Cys-18-Cys-35, and Cys-31-Cys-40.

In terms of tissue distribution, expressed by the venom duct.

It is found in the secreted. The polypeptide is Augerpeptide hhe6.1 (Hastula hectica (Sea snail)).